The following is a 339-amino-acid chain: DNA-directed RNA polymerase subunit alpha (339 aa).

Residues 1 to 233 form an alpha N-terminal domain (alpha-NTD) region; sequence MVREEVAGST…DLFLPFLHAE (233 aa). The alpha C-terminal domain (alpha-CTD) stretch occupies residues 264–339; sequence KKGIPLNCIF…IDLLKNKLSF (76 aa).

Belongs to the RNA polymerase alpha chain family. In plastids the minimal PEP RNA polymerase catalytic core is composed of four subunits: alpha, beta, beta', and beta''. When a (nuclear-encoded) sigma factor is associated with the core the holoenzyme is formed, which can initiate transcription.

Its subcellular location is the plastid. It localises to the chloroplast. The catalysed reaction is RNA(n) + a ribonucleoside 5'-triphosphate = RNA(n+1) + diphosphate. In terms of biological role, DNA-dependent RNA polymerase catalyzes the transcription of DNA into RNA using the four ribonucleoside triphosphates as substrates. The chain is DNA-directed RNA polymerase subunit alpha from Agropyron cristatum (Crested wheatgrass).